Reading from the N-terminus, the 176-residue chain is ATP-dependent protease subunit HslV (176 aa).

Residue threonine 6 is part of the active site. Residues serine 161, cysteine 164, and threonine 167 each coordinate Na(+).

It belongs to the peptidase T1B family. HslV subfamily. A double ring-shaped homohexamer of HslV is capped on each side by a ring-shaped HslU homohexamer. The assembly of the HslU/HslV complex is dependent on binding of ATP.

It is found in the cytoplasm. The catalysed reaction is ATP-dependent cleavage of peptide bonds with broad specificity.. Its activity is regulated as follows. Allosterically activated by HslU binding. In terms of biological role, protease subunit of a proteasome-like degradation complex believed to be a general protein degrading machinery. This Pseudothermotoga lettingae (strain ATCC BAA-301 / DSM 14385 / NBRC 107922 / TMO) (Thermotoga lettingae) protein is ATP-dependent protease subunit HslV.